The primary structure comprises 191 residues: Ribonuclease HII (191 aa).

In terms of domain architecture, RNase H type-2 spans 4–191 (YTAAGLDEVG…HRKTFLSKIQ (188 aa)). 3 residues coordinate a divalent metal cation: Asp10, Glu11, and Asp106.

Belongs to the RNase HII family. The cofactor is Mn(2+). It depends on Mg(2+) as a cofactor.

The protein resides in the cytoplasm. It carries out the reaction Endonucleolytic cleavage to 5'-phosphomonoester.. Functionally, endonuclease that specifically degrades the RNA of RNA-DNA hybrids. This chain is Ribonuclease HII, found in Prochlorococcus marinus (strain SARG / CCMP1375 / SS120).